The chain runs to 1060 residues: Anoctamin-8 (1060 aa).

Residues 1–32 (MAEAASGAGDVTLEGERGKRPPPEGEPAAPAS) form a disordered region. Position 2 is an N-acetylalanine (A2). At 2–244 (AEAASGAGDV…DDICDYFGVK (243 aa)) the chain is on the cytoplasmic side. Basic and acidic residues predominate over residues 14-23 (EGERGKRPPP). A helical membrane pass occupies residues 245–265 (IAMYFAWLGFYTSAMVYPAVF). The Extracellular segment spans residues 266–281 (GSVLYTFTEADQTSRD). Residues 282–302 (VSCVVFALFNVIWSTLFLEEW) traverse the membrane as a helical segment. The Cytoplasmic portion of the chain corresponds to 303–356 (KRRGAELAYKWGTLDSPGEAVEEPRPQFRGIRRISPITRAEEFYYPPWKRLLFQ). Residue S318 is modified to Phosphoserine. Residues 357–377 (LLVSLPLCLACLICVFILMLG) form a helical membrane-spanning segment. Residues 378–400 (CFQLQELVLSVKGLPRLVRFLPK) are Extracellular-facing. The helical transmembrane segment at 401-421 (VMLALLVSVSAEGYKKLAVWL) threads the bilayer. At 422–437 (NDMENYRLESTYERHL) the chain is on the cytoplasmic side. Residues 438–458 (IIKVVLFQFVNSYLSLFYIGF) form a helical membrane-spanning segment. Over 459 to 745 (YLKDMDRLKE…YEDTFQDYQE (287 aa)) the chain is Extracellular. Disordered regions lie at residues 529-605 (AQAD…SLLD), 619-640 (GAGR…SPTM), 653-672 (AEED…EPQT), and 680-723 (GEGR…HSPQ). The segment covering 534–547 (GGAGSRRCLGGGCG) has biased composition (gly residues). Acidic residues-rich tracts occupy residues 549-559 (PEEENEEEEEA) and 581-602 (EEDE…EEGS). Phosphoserine is present on S665. The span at 680–694 (GEGRDQGPDGDRDTE) shows a compositional bias: basic and acidic residues. N708 carries N-linked (GlcNAc...) asparagine glycosylation. A helical membrane pass occupies residues 746–766 (MFVQFGYVVLFSSAFPLAALC). Residues 767–802 (ALVNNLIEIRSDAFKLCTGLQRPFGRRVESIGQWQK) are Cytoplasmic-facing. S796 bears the Phosphoserine mark. The helical transmembrane segment at 803-823 (VMEAMGVLAIVVNCYLIGQCG) threads the bilayer. The Extracellular portion of the chain corresponds to 824 to 836 (QLQRLFPWLSPEA). Residues 837-857 (AIVSVVVLEHLALLVKYLIHV) form a helical membrane-spanning segment. Over 858 to 1060 (AIPDIPGWVA…PRPEDAGHRP (203 aa)) the chain is Cytoplasmic. Residues 884–1060 (HERQAQQRFQ…PRPEDAGHRP (177 aa)) form a disordered region. Composition is skewed to basic and acidic residues over residues 899-927 (RREE…EARA) and 935-950 (VAER…ERPR). Positions 972–986 (TRPPAPTGCAPPPRS) are enriched in pro residues. R991 is modified (asymmetric dimethylarginine; alternate). The residue at position 991 (R991) is an Omega-N-methylarginine; alternate. R999 carries the post-translational modification Omega-N-methylarginine. Positions 1049-1060 (PEPRPEDAGHRP) are enriched in basic and acidic residues.

It belongs to the anoctamin family. In terms of tissue distribution, predominant expression seen in epithelial tissues.

Its subcellular location is the cell membrane. Functionally, does not exhibit calcium-activated chloride channel (CaCC) activity. This is Anoctamin-8 (Ano8) from Mus musculus (Mouse).